We begin with the raw amino-acid sequence, 361 residues long: Ribosomal RNA large subunit methyltransferase M (361 aa).

Residues serine 193, cysteine 226 to glycine 229, aspartate 245, aspartate 265, and aspartate 283 contribute to the S-adenosyl-L-methionine site. The active-site Proton acceptor is lysine 312.

The protein belongs to the class I-like SAM-binding methyltransferase superfamily. RNA methyltransferase RlmE family. RlmM subfamily. As to quaternary structure, monomer.

The protein resides in the cytoplasm. The enzyme catalyses cytidine(2498) in 23S rRNA + S-adenosyl-L-methionine = 2'-O-methylcytidine(2498) in 23S rRNA + S-adenosyl-L-homocysteine + H(+). In terms of biological role, catalyzes the 2'-O-methylation at nucleotide C2498 in 23S rRNA. This Histophilus somni (strain 129Pt) (Haemophilus somnus) protein is Ribosomal RNA large subunit methyltransferase M.